Consider the following 96-residue polypeptide: UPF0251 protein Ssed_3913 (96 aa).

The protein belongs to the UPF0251 family.

The sequence is that of UPF0251 protein Ssed_3913 from Shewanella sediminis (strain HAW-EB3).